The following is a 270-amino-acid chain: Type III pantothenate kinase (270 aa).

16-23 (EIGNTTAM) lines the ATP pocket. Substrate-binding positions include Tyr106 and 113–116 (GADR). Asp115 (proton acceptor) is an active-site residue. Asp136 lines the K(+) pocket. Thr139 serves as a coordination point for ATP. Thr191 lines the substrate pocket.

The protein belongs to the type III pantothenate kinase family. As to quaternary structure, homodimer. It depends on NH4(+) as a cofactor. K(+) serves as cofactor.

Its subcellular location is the cytoplasm. The catalysed reaction is (R)-pantothenate + ATP = (R)-4'-phosphopantothenate + ADP + H(+). It functions in the pathway cofactor biosynthesis; coenzyme A biosynthesis; CoA from (R)-pantothenate: step 1/5. Functionally, catalyzes the phosphorylation of pantothenate (Pan), the first step in CoA biosynthesis. This Chlorobium luteolum (strain DSM 273 / BCRC 81028 / 2530) (Pelodictyon luteolum) protein is Type III pantothenate kinase.